Here is a 486-residue protein sequence, read N- to C-terminus: Arginine/agmatine antiporter (486 aa).

12 helical membrane passes run 12–32, 41–61, 85–105, 129–149, 161–181, 211–231, 242–262, 296–316, 341–361, 367–387, 418–438, and 461–481; these read LGAIALAGMVISSMIGGGIFS, AGAGAIILAWILTGIGMFFIA, GFGPYVGFTIGWGYWLCQIFG, NTIPAIIGGSILIWVFNFIVL, IGTICKLIPLLIFIIITAFFF, STMLVTLWAFIGIEGAVVMSA, ATILGFSGCLIVYVLLSLLPF, IGLLIAILSSWLSWTVIVAEI, VSLYITSALMQVAMLLVYFST, MLSITGVMVLPAYLASAAFLV, IWLIYAGGIKYLFMAIVLLAL, and EVTKITIIAFLALLAIFLFST.

This sequence belongs to the amino acid-polyamine-organocation (APC) superfamily. Basic amino acid/polyamine antiporter (APA) (TC 2.A.3.2) family.

It localises to the cell inner membrane. Catalyzes the exchange of L-arginine for agmatine. The arginine uptake by the bacterium in the macrophage may be a virulence factor against the host innate immune response. This chain is Arginine/agmatine antiporter (aaxC), found in Chlamydia felis (strain Fe/C-56) (Chlamydophila felis).